A 594-amino-acid polypeptide reads, in one-letter code: Glutamate decarboxylase 1 (594 aa).

Residues 1 to 13 (MASSTPSSSATSS) show a composition bias toward low complexity. Residues 1–23 (MASSTPSSSATSSNAGADPNTTN) form a disordered region. The residue at position 78 (S78) is a Phosphoserine. 190–192 (QLS) lines the 4-aminobutanoate pocket. K405 is modified (N6-(pyridoxal phosphate)lysine). Residue R567 participates in 4-aminobutanoate binding.

Belongs to the group II decarboxylase family. As to quaternary structure, homodimer. Requires pyridoxal 5'-phosphate as cofactor.

The catalysed reaction is L-glutamate + H(+) = 4-aminobutanoate + CO2. Catalyzes the synthesis of the inhibitory neurotransmitter gamma-aminobutyric acid (GABA) with pyridoxal 5'-phosphate as cofactor. This is Glutamate decarboxylase 1 (GAD1) from Pan troglodytes (Chimpanzee).